The chain runs to 349 residues: Adenosine deaminase (349 aa).

Zn(2+) contacts are provided by H25 and H27. H27, D29, and G182 together coordinate substrate. H209 contacts Zn(2+). E212 (proton donor) is an active-site residue. D289 lines the Zn(2+) pocket.

Belongs to the metallo-dependent hydrolases superfamily. Adenosine and AMP deaminases family. Adenosine deaminase subfamily. The cofactor is Zn(2+).

The enzyme catalyses adenosine + H2O + H(+) = inosine + NH4(+). It catalyses the reaction 2'-deoxyadenosine + H2O + H(+) = 2'-deoxyinosine + NH4(+). Functionally, catalyzes the hydrolytic deamination of adenosine and 2-deoxyadenosine. In Streptococcus mutans serotype c (strain ATCC 700610 / UA159), this protein is Adenosine deaminase.